A 111-amino-acid polypeptide reads, in one-letter code: UPF0125 protein SO_1475 (111 aa).

The interval 88 to 111 is disordered; sequence VRRRRADKAKDEGRANKVTGGRVS.

Belongs to the UPF0125 (RnfH) family.

The chain is UPF0125 protein SO_1475 from Shewanella oneidensis (strain ATCC 700550 / JCM 31522 / CIP 106686 / LMG 19005 / NCIMB 14063 / MR-1).